Consider the following 320-residue polypeptide: tRNA uridine(34) hydroxylase (320 aa).

One can recognise a Rhodanese domain in the interval 123-217 (EDENTVILDA…YGKDPETKGL (95 aa)). Cys-177 (cysteine persulfide intermediate) is an active-site residue.

The protein belongs to the TrhO family.

It catalyses the reaction uridine(34) in tRNA + AH2 + O2 = 5-hydroxyuridine(34) in tRNA + A + H2O. Its function is as follows. Catalyzes oxygen-dependent 5-hydroxyuridine (ho5U) modification at position 34 in tRNAs. The sequence is that of tRNA uridine(34) hydroxylase from Staphylococcus epidermidis (strain ATCC 35984 / DSM 28319 / BCRC 17069 / CCUG 31568 / BM 3577 / RP62A).